The primary structure comprises 405 residues: Acetylornithine/succinyldiaminopimelate aminotransferase (405 aa).

Pyridoxal 5'-phosphate-binding positions include 108 to 109 (GT) and phenylalanine 141. Arginine 144 lines the N(2)-acetyl-L-ornithine pocket. Residue 226–229 (DEVQ) coordinates pyridoxal 5'-phosphate. At lysine 255 the chain carries N6-(pyridoxal phosphate)lysine. Serine 283 contributes to the N(2)-acetyl-L-ornithine binding site. Threonine 284 serves as a coordination point for pyridoxal 5'-phosphate.

The protein belongs to the class-III pyridoxal-phosphate-dependent aminotransferase family. ArgD subfamily. As to quaternary structure, homodimer. Pyridoxal 5'-phosphate serves as cofactor.

The protein resides in the cytoplasm. The catalysed reaction is N(2)-acetyl-L-ornithine + 2-oxoglutarate = N-acetyl-L-glutamate 5-semialdehyde + L-glutamate. It catalyses the reaction N-succinyl-(2S,6S)-2,6-diaminopimelate + 2-oxoglutarate = (S)-2-succinylamino-6-oxoheptanedioate + L-glutamate. It functions in the pathway amino-acid biosynthesis; L-arginine biosynthesis; N(2)-acetyl-L-ornithine from L-glutamate: step 4/4. It participates in amino-acid biosynthesis; L-lysine biosynthesis via DAP pathway; LL-2,6-diaminopimelate from (S)-tetrahydrodipicolinate (succinylase route): step 2/3. With respect to regulation, inhibited by gabaculine (Gcn). Functionally, involved in both the arginine and lysine biosynthetic pathways. The chain is Acetylornithine/succinyldiaminopimelate aminotransferase from Salmonella typhimurium (strain LT2 / SGSC1412 / ATCC 700720).